The primary structure comprises 182 residues: Peptidyl-tRNA hydrolase (182 aa).

Tyrosine 14 is a tRNA binding site. Histidine 19 (proton acceptor) is an active-site residue. 3 residues coordinate tRNA: phenylalanine 60, asparagine 62, and asparagine 106.

This sequence belongs to the PTH family. As to quaternary structure, monomer.

The protein resides in the cytoplasm. It catalyses the reaction an N-acyl-L-alpha-aminoacyl-tRNA + H2O = an N-acyl-L-amino acid + a tRNA + H(+). In terms of biological role, hydrolyzes ribosome-free peptidyl-tRNAs (with 1 or more amino acids incorporated), which drop off the ribosome during protein synthesis, or as a result of ribosome stalling. Catalyzes the release of premature peptidyl moieties from peptidyl-tRNA molecules trapped in stalled 50S ribosomal subunits, and thus maintains levels of free tRNAs and 50S ribosomes. The polypeptide is Peptidyl-tRNA hydrolase (Campylobacter concisus (strain 13826)).